Reading from the N-terminus, the 79-residue chain is MAQQRRGGFKRRKKFDYIAANKIEYVDYKDTELLSRFVSERGKILPRRVTGTSAKNQRKVTTAIKRARVMALMPYVNED.

The protein belongs to the bacterial ribosomal protein bS18 family. Part of the 30S ribosomal subunit. Forms a tight heterodimer with protein bS6.

Functionally, binds as a heterodimer with protein bS6 to the central domain of the 16S rRNA, where it helps stabilize the platform of the 30S subunit. This Streptococcus thermophilus (strain CNRZ 1066) protein is Small ribosomal subunit protein bS18.